The sequence spans 342 residues: 4-hydroxythreonine-4-phosphate dehydrogenase (342 aa).

Residues H140 and T141 each coordinate substrate. H175, H220, and H275 together coordinate a divalent metal cation. Substrate-binding residues include K283, N292, and R301.

Belongs to the PdxA family. In terms of assembly, homodimer. The cofactor is Zn(2+). It depends on Mg(2+) as a cofactor. Co(2+) is required as a cofactor.

It localises to the cytoplasm. It catalyses the reaction 4-(phosphooxy)-L-threonine + NAD(+) = 3-amino-2-oxopropyl phosphate + CO2 + NADH. It functions in the pathway cofactor biosynthesis; pyridoxine 5'-phosphate biosynthesis; pyridoxine 5'-phosphate from D-erythrose 4-phosphate: step 4/5. In terms of biological role, catalyzes the NAD(P)-dependent oxidation of 4-(phosphooxy)-L-threonine (HTP) into 2-amino-3-oxo-4-(phosphooxy)butyric acid which spontaneously decarboxylates to form 3-amino-2-oxopropyl phosphate (AHAP). The polypeptide is 4-hydroxythreonine-4-phosphate dehydrogenase (Rhizobium meliloti (strain 1021) (Ensifer meliloti)).